A 213-amino-acid chain; its full sequence is Nucleoside triphosphate pyrophosphatase (213 aa).

The active-site Proton acceptor is the Asp-77.

It belongs to the Maf family. A divalent metal cation serves as cofactor.

Its subcellular location is the cytoplasm. It carries out the reaction a ribonucleoside 5'-triphosphate + H2O = a ribonucleoside 5'-phosphate + diphosphate + H(+). It catalyses the reaction a 2'-deoxyribonucleoside 5'-triphosphate + H2O = a 2'-deoxyribonucleoside 5'-phosphate + diphosphate + H(+). Functionally, nucleoside triphosphate pyrophosphatase. May have a dual role in cell division arrest and in preventing the incorporation of modified nucleotides into cellular nucleic acids. The polypeptide is Nucleoside triphosphate pyrophosphatase (Cutibacterium acnes (strain DSM 16379 / KPA171202) (Propionibacterium acnes)).